Reading from the N-terminus, the 691-residue chain is MESESSQDDWSAFDPMSREYYDQVGNRYTNESGQKLIMEAPLPPKDEKEQRATRQAKYPYLVVPKSSPYVTEKMLINFFGRALIKEMEFRRLSRVYFVYFENIASLETAQQRVQRYPNLIKCITGRPQKEREITSDPVTSTEPMPTPGPAISATERTPVNHNREVPISTGGQNHPEFFRPPLVTKDDYKRGSLLATNDPIQRYLNVKYEFALERHDIYKLKDETRIPQVVLHFRSGRTIPLSTVAVTEEDKTKSLLEDGVSKCVVCQNWTDTFCKLCKMPFCNASCFADVAEQHKQACGKGEILNLDEKVGRKYPKPGLPPSGSKVRITAFEQTNVVYVRSADIQIDIAYYTVLTEVMMLGKDASKLQSTPVCGQIVLYKFEGHMSRAMVLNVDNIKEIYVVFIDFGSVEVTQLERLYECSSYLAGLTCYPVAVKLRGVPRRFVGPNIREVMYELDQSLVFNIKYSSREYDTSKGMQVVVMTEIDINRSLNRLFKTILTPVEPSVSDLGYKEDCLPYIPLHCGKNINVVVMDNTFIQCGFIYCTSIDLAYEVTKMQRDIQEYGEKIAKCATYAPPINELCIAKYEGKWRRGLSVELVGDGYPSILFIDYGNIVPTHVTDIRPYPPQFIFPIMTTQLDLIGVPEKPTDEQIKWLDKNYPIGSVITCSEITFDEETNSYSTRIEKLQEFLSLD.

Residues 128-155 are disordered; it reads QKEREITSDPVTSTEPMPTPGPAISATE. 2 consecutive Tudor domains span residues 366–427 and 573–630; these read KLQS…LAGL and APPI…FIFP.

Interacts with aub and piwi. As to expression, gonad-specific.

The protein resides in the cytoplasm. Its subcellular location is the cytoplasmic ribonucleoprotein granule. Gonad-specific protein essential for germline development to repress transposable elements and preventing their mobilization, which is essential for the germline integrity. Acts via the piRNA metabolic process in both germline and somatic gonadal tissues by mediating the repression of transposable elements during meiosis. Required for primary piRNA biogenesis in both germline and somatic gonadal tissues. The protein is Protein vreteno (vret) of Drosophila melanogaster (Fruit fly).